Reading from the N-terminus, the 218-residue chain is Small ribosomal subunit protein uS3 (218 aa).

The KH type-2 domain maps to 38-106 (IREFISKRLS…RVHINILEIK (69 aa)).

Belongs to the universal ribosomal protein uS3 family. Part of the 30S ribosomal subunit. Forms a tight complex with proteins S10 and S14.

Its function is as follows. Binds the lower part of the 30S subunit head. Binds mRNA in the 70S ribosome, positioning it for translation. The protein is Small ribosomal subunit protein uS3 of Bacillus pumilus (strain SAFR-032).